Reading from the N-terminus, the 119-residue chain is UPF0342 protein GK0640 (119 aa).

This sequence belongs to the UPF0342 family.

This Geobacillus kaustophilus (strain HTA426) protein is UPF0342 protein GK0640.